The sequence spans 406 residues: Phosphopentomutase (406 aa).

6 residues coordinate Mn(2+): aspartate 10, aspartate 305, histidine 310, aspartate 346, histidine 347, and histidine 358.

This sequence belongs to the phosphopentomutase family. The cofactor is Mn(2+).

The protein localises to the cytoplasm. The enzyme catalyses 2-deoxy-alpha-D-ribose 1-phosphate = 2-deoxy-D-ribose 5-phosphate. It catalyses the reaction alpha-D-ribose 1-phosphate = D-ribose 5-phosphate. It participates in carbohydrate degradation; 2-deoxy-D-ribose 1-phosphate degradation; D-glyceraldehyde 3-phosphate and acetaldehyde from 2-deoxy-alpha-D-ribose 1-phosphate: step 1/2. Isomerase that catalyzes the conversion of deoxy-ribose 1-phosphate (dRib-1-P) and ribose 1-phosphate (Rib-1-P) to deoxy-ribose 5-phosphate (dRib-5-P) and ribose 5-phosphate (Rib-5-P), respectively. This is Phosphopentomutase from Rhizobium meliloti (strain 1021) (Ensifer meliloti).